The following is a 45-amino-acid chain: Small polypeptide DEVIL 23 (45 aa).

The required for DVL/RTFL small polypeptide activity stretch occupies residues lysine 13–aspartate 44. The chain crosses the membrane as a helical span at residues cysteine 22 to leucine 39.

Belongs to the DVL/RTFL small polypeptides family.

The protein localises to the cell membrane. In terms of biological role, small polypeptide acting as a regulatory molecule which coordinates cellular responses required for differentiation, growth and development, probably by restricting polar cell proliferation in lateral organs and coordinating socket cell recruitment and differentiation at trichome sites. This chain is Small polypeptide DEVIL 23, found in Arabidopsis thaliana (Mouse-ear cress).